The primary structure comprises 68 residues: uncharacterized protein (68 aa).

This is an uncharacterized protein from Haemophilus influenzae (strain ATCC 51907 / DSM 11121 / KW20 / Rd).